Consider the following 625-residue polypeptide: DELLA protein SLR1 (625 aa).

Residues M1–E34 form a disordered region. The short motif at D39 to A43 is the DELLA motif element. Residues T167–V208 form a disordered region. Residues T189–S198 show a composition bias toward low complexity. The 390-residue stretch at V232 to R621 folds into the GRAS domain. The segment at I239–Y294 is leucine repeat I (LRI). Residues L241–M278 form a required for possible homodimerization region. The LxCxE motif motif lies at L246 to E250. A VHIID region spans residues H313–G378. Positions V344–D348 match the VHIID motif. The segment at Q392–E431 is leucine repeat II (LRII). The PFYRE stretch occupies residues I441–N542. The LXXLL motif signature appears at L449–L453. Residues A545–R621 form an SAW region.

This sequence belongs to the GRAS family. DELLA subfamily.

In terms of biological role, probable transcriptional regulator that acts as a repressor of the gibberellin (GA) signaling pathway. Probably acts by participating in large multiprotein complexes that repress transcription of GA-inducible genes. Upon GA application, it is degraded by the proteasome, allowing the GA signaling pathway. In contrast, its overexpression prevents the GA signaling pathway and induces a dwarf phenotype. The chain is DELLA protein SLR1 from Oryza sativa subsp. indica (Rice).